We begin with the raw amino-acid sequence, 130 residues long: Small ribosomal subunit protein uS11 (130 aa).

It belongs to the universal ribosomal protein uS11 family. As to quaternary structure, part of the 30S ribosomal subunit. Interacts with proteins S7 and S18. Binds to IF-3.

In terms of biological role, located on the platform of the 30S subunit, it bridges several disparate RNA helices of the 16S rRNA. Forms part of the Shine-Dalgarno cleft in the 70S ribosome. The polypeptide is Small ribosomal subunit protein uS11 (Borreliella afzelii (strain PKo) (Borrelia afzelii)).